Consider the following 447-residue polypeptide: MREIVHLQTGQCGNQIGAAFWQTISGEHGLDGSGVYNGTSDLQLERMNVYFNEASNNKFVPRAVLVDLEPGTMDAVRAGPFGQLFRPDNFVFGQSGAGNNWAKGHYTEGAELVDQVLDVVRREAEGCDCLQGFQITHSLGGGTGAGMGTLLISKIREEFPDRMMATYSVVPSPKVSDTVVEPYNATLSIHQLVENSDETFCIDNEALYDICMRTLKLNNPSYGDLNHLVSAVMSGVTTCLRFPGQLNSDLRKLAVNMVPFPRLHFFMVGFAPLTSRGAHSFRAVTVPELTQQMFDPKNMMAASDFRNGRYLTCSAYFRGKVSMKEVEDQMRNVQNKNSSYFVEWIPNNVQTALCSIPPRGLKMSSTFVGNSTSIQELFKRVGDQFTAMFRRKAFLHWYTGEGMDEMEFTEAESNMNDLVSEYQQYQEASVSEGEEEYDEEAPLEAEE.

GTP is bound by residues glutamine 11, glutamate 69, serine 138, glycine 142, threonine 143, glycine 144, asparagine 204, and asparagine 226. A Mg(2+)-binding site is contributed by glutamate 69. Residues 424–447 are disordered; it reads QYQEASVSEGEEEYDEEAPLEAEE. A compositionally biased stretch (acidic residues) spans 432-447; sequence EGEEEYDEEAPLEAEE.

Belongs to the tubulin family. As to quaternary structure, dimer of alpha and beta chains. A typical microtubule is a hollow water-filled tube with an outer diameter of 25 nm and an inner diameter of 15 nM. Alpha-beta heterodimers associate head-to-tail to form protofilaments running lengthwise along the microtubule wall with the beta-tubulin subunit facing the microtubule plus end conferring a structural polarity. Microtubules usually have 13 protofilaments but different protofilament numbers can be found in some organisms and specialized cells. It depends on Mg(2+) as a cofactor.

It is found in the cytoplasm. It localises to the cytoskeleton. Its function is as follows. Tubulin is the major constituent of microtubules, a cylinder consisting of laterally associated linear protofilaments composed of alpha- and beta-tubulin heterodimers. Microtubules grow by the addition of GTP-tubulin dimers to the microtubule end, where a stabilizing cap forms. Below the cap, tubulin dimers are in GDP-bound state, owing to GTPase activity of alpha-tubulin. The sequence is that of Tubulin beta chain (TUB1) from Cochliobolus heterostrophus (Southern corn leaf blight fungus).